The sequence spans 236 residues: Ubiquinone biosynthesis O-methyltransferase (236 aa).

Residues Arg-39, Gly-59, Asp-80, and Met-124 each coordinate S-adenosyl-L-methionine.

This sequence belongs to the methyltransferase superfamily. UbiG/COQ3 family.

The catalysed reaction is a 3-demethylubiquinol + S-adenosyl-L-methionine = a ubiquinol + S-adenosyl-L-homocysteine + H(+). It catalyses the reaction a 3-(all-trans-polyprenyl)benzene-1,2-diol + S-adenosyl-L-methionine = a 2-methoxy-6-(all-trans-polyprenyl)phenol + S-adenosyl-L-homocysteine + H(+). It functions in the pathway cofactor biosynthesis; ubiquinone biosynthesis. Its function is as follows. O-methyltransferase that catalyzes the 2 O-methylation steps in the ubiquinone biosynthetic pathway. The protein is Ubiquinone biosynthesis O-methyltransferase of Shewanella baltica (strain OS223).